Consider the following 30-residue polypeptide: GCPRILMRCKQDSDCLAGCVCGPNGFCGSP.

Cystine bridges form between cysteine 2–cysteine 19, cysteine 9–cysteine 21, and cysteine 15–cysteine 27.

It belongs to the protease inhibitor I7 (squash-type serine protease inhibitor) family.

It is found in the secreted. In terms of biological role, inhibits trypsin. The polypeptide is Trypsin inhibitor 2 (Ecballium elaterium (Squirting cucumber)).